Reading from the N-terminus, the 170-residue chain is Photosystem I assembly protein Ycf3 (170 aa).

TPR repeat units lie at residues 35–68 (AFTYYRDGMLAQSEGNYAEALQNYYEATRLEIDP), 72–105 (SYILYNIGLIHTSNGEHTKALEYYFRALERNPFL), and 120–153 (GEQAILQGDSEIAEAWFDQAAEYWKQAIALTPGN).

Belongs to the Ycf3 family.

Its subcellular location is the plastid. It localises to the chloroplast thylakoid membrane. Functionally, essential for the assembly of the photosystem I (PSI) complex. May act as a chaperone-like factor to guide the assembly of the PSI subunits. This is Photosystem I assembly protein Ycf3 from Agrostis stolonifera (Creeping bentgrass).